A 524-amino-acid chain; its full sequence is MDQEKVIVIDFGGQYNQLVARRVRECNVYCEIYSYKTDLAQIKAMNPKGIILTGGPNSCYEDGAPTCTKELFELGVPVLGLCYGAQLMQHVLGGKVEKAPVREYGKTETFVDKSSALFSDVSEKTIVWMSHFDYISQIAPGFKIVAHTADCPVAAAECTEKNLYAIQFHPEVLHTQEGTKMLHNFVRGVCGCAGTWKMDAFVENTIKEIREKVGSGKVLLALSGGVDSSVAAGLLSRAIGKQLTCVFVDHGLLRKDEGDEVESVFGPEGQFDLNFIRVNAQERYYSKLAGVTEPEAKRKIIGEEFIRVFEEEAKKIGAVDFLAQGTIYPDVVESGLGGESAVIKSHHNVGGLPDFVDFKEIIEPLRNLFKDEVRKAGLELGIPEHLVFRQPFPGPGLGIRIIGEVTADKVRIVQDADFIYRSEVDKAVAEYKKANGKAPAWMPNQYFAALTNMRSVGVMGDERTYDYAVALRAVNTIDFMTAESAEIPFEVLQTVMSRIINEVRGVNRVFYDLTSKPPGTIEFE.

Positions 5-195 (KVIVIDFGGQ…VRGVCGCAGT (191 aa)) constitute a Glutamine amidotransferase type-1 domain. C82 serves as the catalytic Nucleophile. Active-site residues include H169 and E171. One can recognise a GMPS ATP-PPase domain in the interval 196–389 (WKMDAFVENT…LGIPEHLVFR (194 aa)). 223–229 (SGGVDSS) is a binding site for ATP.

In terms of assembly, homodimer.

It catalyses the reaction XMP + L-glutamine + ATP + H2O = GMP + L-glutamate + AMP + diphosphate + 2 H(+). It functions in the pathway purine metabolism; GMP biosynthesis; GMP from XMP (L-Gln route): step 1/1. Catalyzes the synthesis of GMP from XMP. This is GMP synthase [glutamine-hydrolyzing] from Lachnospira eligens (strain ATCC 27750 / DSM 3376 / VPI C15-48 / C15-B4) (Eubacterium eligens).